Consider the following 777-residue polypeptide: Cyclin-F (777 aa).

The Nuclear localization signal 1 motif lies at 20–28 (KRRIKRRPR). In terms of domain architecture, F-box spans 29-76 (NLTILSLPEDVLFHILKWLSVGDILAVRAVHSHLKYLVDNHASVWASA). Residues 288-405 (QASQAVNKQQ…EIISALEGKI (118 aa)) enclose the Cyclin N-terminal domain. 3 consecutive short sequence motifs (d box) follow at residues 310–313 (RYIL), 343–346 (RRRL), and 349–352 (RYKL). Disordered regions lie at residues 544–591 (QESP…TPTA) and 651–777 (QESS…HLAS). Positions 568–574 (RRSKRKR) match the Nuclear localization signal 2 motif. The segment at 582–761 (RGSFVTTPTA…ESGVHQQPVK (180 aa)) is PEST. 2 stretches are compositionally biased toward low complexity: residues 695-708 (SGYS…PISS) and 719-731 (STSV…HSST). A compositionally biased stretch (polar residues) spans 751 to 767 (PESGVHQQPVKRQNLSV). The short motif at 762 to 765 (RQNL) is the D box 4 element. Over residues 768–777 (HSDKDMHLAS) the composition is skewed to basic and acidic residues.

Belongs to the cyclin family. Cyclin AB subfamily. As to quaternary structure, component of the SCF(CCNF) complex consisting of CUL1, RBX1, SKP1 and CCNF. Interacts with SKP1. Interacts with CUL1. Interacts with CCNB1; interaction is required for nuclear localization of CCNB1. Interacts with CCP110; this interaction leads to CCP110 ubiquitination and degradation via the proteasome pathway. Interacts (via the Cyclin N-terminal domain) with MYBL2/BMYB. Interacts with FZR1/CDH1 (via N-terminus). Interacts with RRM2 (via Cy motif and when phosphorylated at 'Thr-33'); the interaction occurs exclusively in G2 and early M. Interacts with CDC6 (via Cy motif); the interaction takes place during G2 and M phase. Post-translationally, degraded when the spindle assembly checkpoint is activated during the G2-M transition. Degradation is not dependent on the proteasome or ubiquitin and depends on the C-terminal PEST sequence. In terms of processing, phosphorylated just before cells enter into mitosis. Ubiquitinated by the anaphase-promoting complex (APC/C); leading to its degradation by the proteasome.

Its subcellular location is the nucleus. The protein resides in the cytoplasm. It is found in the perinuclear region. The protein localises to the cytoskeleton. It localises to the microtubule organizing center. Its subcellular location is the centrosome. The protein resides in the centriole. Substrate recognition component of a SCF (SKP1-CUL1-F-box protein) E3 ubiquitin-protein ligase complex which mediates the ubiquitination and subsequent proteasomal degradation of target proteins. The SCF(CCNF) E3 ubiquitin-protein ligase complex is an integral component of the ubiquitin proteasome system (UPS) and links proteasome degradation to the cell cycle. Mediates the substrate recognition and the proteasomal degradation of various target proteins involved in the regulation of cell cycle progression and in the maintenance of genome stability. Mediates the ubiquitination and subsequent proteasomal degradation of CP110 during G2 phase, thereby acting as an inhibitor of centrosome reduplication. In G2, mediates the ubiquitination and proteasomal degradation of CDC6, thereby suppressing DNA re-replication and preventing genome instability. Involved in the ubiquitination and degradation of the substrate adapter CDH1 of the anaphase-promoting complex (APC/C), thereby acting as an antagonist of APC/C in regulating G1 progression and S phase entry. May play a role in the G2 cell cycle checkpoint control after DNA damage, possibly by promoting the ubiquitination of MYBL2/BMYB. This chain is Cyclin-F (Ccnf), found in Mus musculus (Mouse).